The primary structure comprises 739 residues: Adenosylcobalamin-dependent ribonucleoside-triphosphate reductase (739 aa).

An intrachain disulfide couples cysteine 119 to cysteine 419. Positions 147-158 are effector region-1; it reads SMPFSFLFDELM. Residues 168–313 form an effector region-2 region; that stretch reads ARSNISQIPR…ICNLIGKAVV (146 aa). Catalysis depends on residues cysteine 408 and glutamate 410. The segment at 565-626 is adenosylcobalamin-binding-1; that stretch reads FHYGAYLIQR…NPNFASAGTV (62 aa). The adenosylcobalamin-binding-2 stretch occupies residues 685-724; sequence LQQAPKEPIDKETYEKRSQEITGNVEEVFSQLNSDVKDLE.

This sequence belongs to the class II ribonucleoside-triphosphate reductase family. Monomer. Adenosylcob(III)alamin is required as a cofactor.

The enzyme catalyses a 2'-deoxyribonucleoside 5'-triphosphate + [thioredoxin]-disulfide + H2O = a ribonucleoside 5'-triphosphate + [thioredoxin]-dithiol. Its activity is regulated as follows. Allosterically regulated by ATP and dNTP. In Lactobacillus delbrueckii subsp. bulgaricus (strain ATCC 11842 / DSM 20081 / BCRC 10696 / JCM 1002 / NBRC 13953 / NCIMB 11778 / NCTC 12712 / WDCM 00102 / Lb 14), this protein is Adenosylcobalamin-dependent ribonucleoside-triphosphate reductase (rtpR).